The following is a 360-amino-acid chain: POU domain, class 5, transcription factor 1 (360 aa).

Disordered stretches follow at residues 1–52 and 88–114; these read MAGH…PGVG and GGLE…SPEP. The 9aaTAD motif lies at 4-12; the sequence is HLASDFAFS. Residue S111 is modified to Phosphoserine; by MAPK. Residue K123 forms a Glycyl lysine isopeptide (Lys-Gly) (interchain with G-Cter in SUMO) linkage. The POU-specific domain occupies 138 to 212; sequence DIKALQKELE…LLQKWVEEAD (75 aa). R157 and Q164 together coordinate DNA. DNA-binding stretches follow at residues 180 to 186 and 193 to 196; these read SQTTICR and SFKN. Positions 230–289 form a DNA-binding region, homeobox; that stretch reads RKRKRTSIENRVRGNLENLFLQCPKPTLQQISHIAQQLGLEKDVVRVWFCNRRQKGKRSS. Phosphothreonine is present on T235. Phosphoserine is present on residues S236, S289, S290, and S355.

This sequence belongs to the POU transcription factor family. Class-5 subfamily. As to quaternary structure, interacts with PKM. Interacts with WWP2. Interacts with UBE2I and ZSCAN10. Interacts with PCGF1. Interacts with ESRRB; recruits ESRRB near the POU5F1-SOX2 element in the NANOG proximal promoter; the interaction is DNA independent. Interacts with ZNF322. Interacts with MAPK8 and MAPK9; the interaction allows MAPK8 and MAPK9 to phosphorylate POU5F1 on Ser-355. Interacts (when phosphorylated on Ser-355) with FBXW8. Interacts with FBXW4. Interacts with SOX2 and SOX15; binds synergistically with either SOX2 or SOX15 to DNA. Interacts with DDX56. In terms of processing, sumoylation enhances the protein stability, DNA binding and transactivation activity. Sumoylation is required for enhanced YES1 expression. Ubiquitinated; undergoes 'Lys-63'-linked polyubiquitination by WWP2 leading to proteasomal degradation. Post-translationally, ERK1/2-mediated phosphorylation at Ser-111 promotes nuclear exclusion and proteasomal degradation. Phosphorylation at Thr-235 and Ser-236 decrease DNA-binding and alters ability to activate transcription. In terms of tissue distribution, expressed in developing brain. Highest levels found in specific cell layers of the cortex, the olfactory bulb, the hippocampus and the cerebellum. Low levels of expression in adult tissues.

The protein localises to the cytoplasm. It localises to the nucleus. Transcription factor that binds to the octamer motif (5'-ATTTGCAT-3'). Forms a trimeric complex with SOX2 or SOX15 on DNA and controls the expression of a number of genes involved in embryonic development such as YES1, FGF4, UTF1 and ZFP206. Critical for early embryogenesis and for embryonic stem cell pluripotency. This is POU domain, class 5, transcription factor 1 (POU5F1) from Homo sapiens (Human).